Reading from the N-terminus, the 216-residue chain is Protein Nef (216 aa).

Residues 1 to 32 (MGGKWSKHSVPGWSTVRERMRRAEPATDRVRQ) are disordered. A lipid anchor (N-myristoyl glycine; by host) is attached at Gly2. Residue Ser6 is modified to Phosphoserine; by host. Residues 16-32 (VRERMRRAEPATDRVRQ) are compositionally biased toward basic and acidic residues. An acidic; interacts with host PACS1 and PACS2; stabilizes the interaction of NEF/MHC-I with host AP1M1; necessary for MHC-I internalization region spans residues 72 to 75 (EDEE). Residues 79–88 (PVRPQVPLRP) are SH3-binding; interaction with Src family tyrosine kinases. The PxxP; stabilizes the interaction of NEF/MHC-I with host AP1M1; necessary for MHC-I internalization signature appears at 82 to 85 (PQVP). Positions 118 to 134 (DILDLWIYHTQGYFPDW) are mediates dimerization, Nef-PTE1 interaction. Positions 158–190 (VDPEKVEEANEGENNCLLHPMSQHGMDDPEKEV) are binding to ATP6V1H. Residues 174–175 (LL) carry the Dileucine internalization motif; necessary for CD4 internalization motif. Positions 184–185 (DD) match the Diacidic; necessary for CD4 internalization motif.

This sequence belongs to the lentivirus primate group Nef protein family. As to quaternary structure, monomer; cytosolic form. Homodimer; membrane bound form. Interacts with Nef associated p21-activated kinase (PAK2); this interaction activates PAK2. Associates with the Nef-MHC-I-AP1 complex; this complex is required for MHC-I internalization. Interacts (via C-terminus) with host PI3-kinase. Interacts with host PACS1; this interaction seems to be weak. Interacts with host PACS2. Interacts with host LCK and MAPK3; these interactions inhibit the kinase activity of the latter. Interacts with host ATP6V1H; this interaction may play a role in CD4 endocytosis. Associates with the CD4-Nef-AP2 complex; this complex is required for CD4 internalization. Interacts with host AP2 subunit alpha and AP2 subunit sigma2. Interacts with TCR-zeta chain; this interaction up-regulates the Fas ligand (FasL) surface expression. Interacts with host HCK, LYN, and SRC; these interactions activate the Src family kinases. Interacts with MAP3K5; this interaction inhibits the Fas and TNFR-mediated death signals. Interacts with beta-COP and PTE1. Interacts with human RACK1; this increases Nef phosphorylation by PKC. Interacts with TP53; this interaction decreases the half-life of TP53, protecting the infected cell against p53-mediated apoptosis. In terms of processing, the virion-associated Nef proteins are cleaved by the viral protease to release the soluble C-terminal core protein. Nef is probably cleaved concomitantly with viral structural proteins on maturation of virus particles. Post-translationally, myristoylated. Phosphorylated on serine residues, probably by host PKCdelta and theta.

The protein localises to the host cell membrane. It is found in the virion. The protein resides in the secreted. It localises to the host Golgi apparatus membrane. Factor of infectivity and pathogenicity, required for optimal virus replication. Alters numerous pathways of T-lymphocyte function and down-regulates immunity surface molecules in order to evade host defense and increase viral infectivity. Alters the functionality of other immunity cells, like dendritic cells, monocytes/macrophages and NK cells. Its function is as follows. In infected CD4(+) T-lymphocytes, down-regulates the surface MHC-I, mature MHC-II, CD4, CD28, CCR5 and CXCR4 molecules. Mediates internalization and degradation of host CD4 through the interaction of with the cytoplasmic tail of CD4, the recruitment of AP-2 (clathrin adapter protein complex 2), internalization through clathrin coated pits, and subsequent transport to endosomes and lysosomes for degradation. Diverts host MHC-I molecules to the trans-Golgi network-associated endosomal compartments by an endocytic pathway to finally target them for degradation. MHC-I down-regulation may involve AP-1 (clathrin adapter protein complex 1) or possibly Src family kinase-ZAP70/Syk-PI3K cascade recruited by PACS2. In consequence infected cells are masked for immune recognition by cytotoxic T-lymphocytes. Decreasing the number of immune receptors also prevents reinfection by more HIV particles (superinfection). Down-regulates host SERINC3 and SERINC5 thereby excluding these proteins from the viral particles. Virion infectivity is drastically higher when SERINC3 or SERINC5 are excluded from the viral envelope, because these host antiviral proteins impair the membrane fusion event necessary for subsequent virion penetration. In terms of biological role, bypasses host T-cell signaling by inducing a transcriptional program nearly identical to that of anti-CD3 cell activation. Interaction with TCR-zeta chain up-regulates the Fas ligand (FasL). Increasing surface FasL molecules and decreasing surface MHC-I molecules on infected CD4(+) cells send attacking cytotoxic CD8+ T-lymphocytes into apoptosis. Functionally, plays a role in optimizing the host cell environment for viral replication without causing cell death by apoptosis. Protects the infected cells from apoptosis in order to keep them alive until the next virus generation is ready to strike. Inhibits the Fas and TNFR-mediated death signals by blocking MAP3K5/ASK1. Decreases the half-life of TP53, protecting the infected cell against p53-mediated apoptosis. Inhibits the apoptotic signals regulated by the Bcl-2 family proteins through the formation of a Nef/PI3-kinase/PAK2 complex that leads to activation of PAK2 and induces phosphorylation of host BAD. Extracellular Nef protein targets CD4(+) T-lymphocytes for apoptosis by interacting with CXCR4 surface receptors. The chain is Protein Nef from Homo sapiens (Human).